Consider the following 454-residue polypeptide: Argininosuccinate synthase (454 aa).

ATP-binding positions include 17–25 and Ala43; that span reads AFSGGLDTS. Tyr99 contacts L-citrulline. Gly129 and Thr131 together coordinate ATP. Thr131, Asn135, and Asp136 together coordinate L-aspartate. Asn135 is a binding site for L-citrulline. Position 136 (Asp136) interacts with ATP. L-citrulline is bound by residues Arg139 and Ser192. An ATP-binding site is contributed by Asp194. L-citrulline is bound by residues Thr201, Glu203, and Glu280.

It belongs to the argininosuccinate synthase family. Type 2 subfamily. Homotetramer.

It localises to the cytoplasm. It carries out the reaction L-citrulline + L-aspartate + ATP = 2-(N(omega)-L-arginino)succinate + AMP + diphosphate + H(+). It functions in the pathway amino-acid biosynthesis; L-arginine biosynthesis; L-arginine from L-ornithine and carbamoyl phosphate: step 2/3. This Yersinia enterocolitica serotype O:8 / biotype 1B (strain NCTC 13174 / 8081) protein is Argininosuccinate synthase.